Reading from the N-terminus, the 426-residue chain is Chaperone SurA (426 aa).

The signal sequence occupies residues 1–13; the sequence is MLGALFLSTAASA. PpiC domains lie at 164 to 265 and 274 to 373; these read SEEL…KLLD and RDEV…EVLG.

Its subcellular location is the periplasm. The catalysed reaction is [protein]-peptidylproline (omega=180) = [protein]-peptidylproline (omega=0). In terms of biological role, chaperone involved in the correct folding and assembly of outer membrane proteins. Recognizes specific patterns of aromatic residues and the orientation of their side chains, which are found more frequently in integral outer membrane proteins. May act in both early periplasmic and late outer membrane-associated steps of protein maturation. The polypeptide is Chaperone SurA (Pseudomonas fluorescens (strain ATCC BAA-477 / NRRL B-23932 / Pf-5)).